A 491-amino-acid polypeptide reads, in one-letter code: Tryptophan 5-hydroxylase 2 (491 aa).

Phosphoserine is present on Ser19. Residues 33–63 (NLTVNKSNSGKNDDKKGNKGSSRSETAPDSG) are disordered. Positions 66-141 (AVVFSLRNEV…TIVTLNPPEN (76 aa)) constitute an ACT domain. 3 residues coordinate Fe cation: His319, His324, and Glu364.

The protein belongs to the biopterin-dependent aromatic amino acid hydroxylase family. Interacts with DNAJC12. The cofactor is Fe(2+).

It carries out the reaction (6R)-L-erythro-5,6,7,8-tetrahydrobiopterin + L-tryptophan + O2 = 5-hydroxy-L-tryptophan + (4aS,6R)-4a-hydroxy-L-erythro-5,6,7,8-tetrahydrobiopterin. It functions in the pathway aromatic compound metabolism; serotonin biosynthesis; serotonin from L-tryptophan: step 1/2. The polypeptide is Tryptophan 5-hydroxylase 2 (TPH2) (Equus caballus (Horse)).